We begin with the raw amino-acid sequence, 131 residues long: Keratin, high-sulfur matrix protein, IIIA3 (131 aa).

Wool.

Its function is as follows. The keratin products of mammalian epidermal derivatives such as wool and hair consist of microfibrils embedded in a rigid matrix of other proteins. The matrix proteins include the high-sulfur and high-tyrosine keratins, having molecular weights of 6-20 kDa, whereas the microfibrils contain the larger, low-sulfur keratins (40-56 kDa). In Ovis aries (Sheep), this protein is Keratin, high-sulfur matrix protein, IIIA3.